A 232-amino-acid chain; its full sequence is Pseudaminic acid cytidylyltransferase (232 aa).

It belongs to the CMP-NeuNAc synthase family. Mg(2+) is required as a cofactor.

The enzyme catalyses pseudaminate + CTP = CMP-pseudaminate + diphosphate. Functionally, catalyzes the final step in the biosynthesis of pseudaminic acid, a sialic-acid-like sugar that is used to modify flagellin. Mediates the activation of pseudaminic acid with CMP by forming CMP-pseudaminic acid. The sequence is that of Pseudaminic acid cytidylyltransferase (pseF) from Campylobacter jejuni subsp. jejuni serotype O:2 (strain ATCC 700819 / NCTC 11168).